A 260-amino-acid chain; its full sequence is 3-methyl-2-oxobutanoate hydroxymethyltransferase (260 aa).

Mg(2+)-binding residues include Asp44 and Asp83. Residues 44-45, Asp83, and Lys113 contribute to the 3-methyl-2-oxobutanoate site; that span reads DS. Mg(2+) is bound at residue Glu115. Glu182 (proton acceptor) is an active-site residue.

It belongs to the PanB family. In terms of assembly, homodecamer; pentamer of dimers. The cofactor is Mg(2+).

It localises to the cytoplasm. It catalyses the reaction 3-methyl-2-oxobutanoate + (6R)-5,10-methylene-5,6,7,8-tetrahydrofolate + H2O = 2-dehydropantoate + (6S)-5,6,7,8-tetrahydrofolate. Its pathway is cofactor biosynthesis; (R)-pantothenate biosynthesis; (R)-pantoate from 3-methyl-2-oxobutanoate: step 1/2. Functionally, catalyzes the reversible reaction in which hydroxymethyl group from 5,10-methylenetetrahydrofolate is transferred onto alpha-ketoisovalerate to form ketopantoate. This Synechocystis sp. (strain ATCC 27184 / PCC 6803 / Kazusa) protein is 3-methyl-2-oxobutanoate hydroxymethyltransferase.